We begin with the raw amino-acid sequence, 220 residues long: Putative phosphatase YhcW (220 aa).

Aspartate 8 acts as the Nucleophile in catalysis. Residues aspartate 8, aspartate 10, and aspartate 166 each coordinate a divalent metal cation. Aspartate 10 acts as the Proton donor in catalysis.

It belongs to the HAD-like hydrolase superfamily. CbbY/CbbZ/Gph/YieH family. Requires a divalent metal cation as cofactor.

This chain is Putative phosphatase YhcW (yhcW), found in Bacillus subtilis (strain 168).